A 395-amino-acid polypeptide reads, in one-letter code: Membrane glycoprotein spo14 (395 aa).

The Cytoplasmic portion of the chain corresponds to 1 to 346 (MAELHLSFPA…KLEDAGVILR (346 aa)). 2 WD repeats span residues 250 to 285 (MIRD…RFMS) and 290 to 326 (KLSQ…CLQF). Residues 347–367 (LSLMFPFVLAILYFYLQLLFP) traverse the membrane as a helical; Signal-anchor for type II membrane protein segment. Topologically, residues 368–395 (DEKLDAIHRFFSFILHIFSKYTIRNYDL) are lumenal.

The protein resides in the endoplasmic reticulum membrane. It is found in the golgi apparatus. Its subcellular location is the cis-Golgi network membrane. Functionally, required for the formation of transport vesicles from the ER. This function involves the cytoplasmic domain of the protein, which is thought to interact with the small GTP-binding protein sar1. This is Membrane glycoprotein spo14 (spo14) from Schizosaccharomyces pombe (strain 972 / ATCC 24843) (Fission yeast).